Reading from the N-terminus, the 1342-residue chain is DNA-directed RNA polymerase subunit beta (1342 aa).

The protein belongs to the RNA polymerase beta chain family. The RNAP catalytic core consists of 2 alpha, 1 beta, 1 beta' and 1 omega subunit. When a sigma factor is associated with the core the holoenzyme is formed, which can initiate transcription.

The catalysed reaction is RNA(n) + a ribonucleoside 5'-triphosphate = RNA(n+1) + diphosphate. Functionally, DNA-dependent RNA polymerase catalyzes the transcription of DNA into RNA using the four ribonucleoside triphosphates as substrates. This chain is DNA-directed RNA polymerase subunit beta, found in Histophilus somni (strain 2336) (Haemophilus somnus).